Consider the following 397-residue polypeptide: tRNA-specific 2-thiouridylase MnmA (397 aa).

Residues 19–26 and Leu-45 contribute to the ATP site; that span reads AMSGGVDS. Cys-113 acts as the Nucleophile in catalysis. Cys-113 and Cys-210 are disulfide-bonded. Gly-137 provides a ligand contact to ATP. Positions 160–162 are interaction with tRNA; that stretch reads RDQ. The active-site Cysteine persulfide intermediate is Cys-210.

The protein belongs to the MnmA/TRMU family.

It is found in the cytoplasm. The catalysed reaction is S-sulfanyl-L-cysteinyl-[protein] + uridine(34) in tRNA + AH2 + ATP = 2-thiouridine(34) in tRNA + L-cysteinyl-[protein] + A + AMP + diphosphate + H(+). Its function is as follows. Catalyzes the 2-thiolation of uridine at the wobble position (U34) of tRNA, leading to the formation of s(2)U34. This chain is tRNA-specific 2-thiouridylase MnmA, found in Bradyrhizobium sp. (strain ORS 278).